A 212-amino-acid polypeptide reads, in one-letter code: Acyl-homoserine-lactone synthase (212 aa).

It belongs to the autoinducer synthase family.

It carries out the reaction a fatty acyl-[ACP] + S-adenosyl-L-methionine = an N-acyl-L-homoserine lactone + S-methyl-5'-thioadenosine + holo-[ACP] + H(+). Its function is as follows. Required for the synthesis of autoinducer molecules which bind to RaiR and that are involved in the restriction of nodule number. The protein is Acyl-homoserine-lactone synthase (raiI) of Rhizobium etli.